The chain runs to 328 residues: Urokinase plasminogen activator surface receptor (328 aa).

Positions 1–24 are cleaved as a signal peptide; the sequence is MGLLRRRLLLLVVVVTTCVPASQG. UPAR/Ly6 domains lie at 25–118, 118–213, and 214–299; these read LRCI…GRYL, LECA…PPNG, and FQCY…RPTG. Intrachain disulfides connect cysteine 27–cysteine 48, cysteine 30–cysteine 36, and cysteine 41–cysteine 69. An N-linked (GlcNAc...) asparagine glycan is attached at asparagine 76. 11 disulfide bridges follow: cysteine 95–cysteine 100, cysteine 120–cysteine 147, cysteine 123–cysteine 130, cysteine 140–cysteine 169, cysteine 175–cysteine 192, cysteine 193–cysteine 198, cysteine 216–cysteine 244, cysteine 219–cysteine 227, cysteine 237–cysteine 263, cysteine 269–cysteine 288, and cysteine 289–cysteine 294. Asparagine 184, asparagine 194, asparagine 222, asparagine 255, asparagine 283, and asparagine 290 each carry an N-linked (GlcNAc...) asparagine glycan. Glycine 299 carries GPI-anchor amidated glycine lipidation. Positions 300–328 are cleaved as a propeptide — removed in mature form; sequence GAPGPGPAHLILIASLLLTLRLWGIPLWT.

As to quaternary structure, monomer. Interacts (via the UPAR/Ly6 domains) with SRPX2. Interacts with MRC2. Interacts with SORL1 (via N-terminal ectodomain); this interaction decreases PLAUR internalization. The ternary complex composed of PLAUR-PLAU-SERPINE1 also interacts with SORL1. Interacts with CD82; this interaction prevents PLAUR from binding to its high affinity ligand PLAU.

It localises to the cell membrane. The protein localises to the secreted. Acts as a receptor for urokinase plasminogen activator. Plays a role in localizing and promoting plasmin formation. Mediates the proteolysis-independent signal transduction activation effects of U-PA. The chain is Urokinase plasminogen activator surface receptor (Plaur) from Rattus norvegicus (Rat).